A 206-amino-acid chain; its full sequence is Protein DEHYDRATION-INDUCED 19 (206 aa).

Thr105 is subject to Phosphothreonine. At Ser107 the chain carries Phosphoserine. A disordered region spans residues 142 to 167 (SSFISPTRSQSSPAPRQTKNVSEDKQ). Residues 143-161 (SFISPTRSQSSPAPRQTKN) are compositionally biased toward polar residues.

The protein belongs to the Di19 family. In terms of assembly, interacts with ADO2/LKP2, CPK11 and CPK4. Weak interaction with CPK12 and no interactions with CPK1, CPK5 or CPK26. Post-translationally, phosphorylated within the NLS/NES region. In terms of tissue distribution, expressed in seedlings, roots, leaves, stems, flowers and siliques.

The protein localises to the nucleus. The sequence is that of Protein DEHYDRATION-INDUCED 19 (DI19-1) from Arabidopsis thaliana (Mouse-ear cress).